Consider the following 287-residue polypeptide: 4-hydroxybenzoate octaprenyltransferase (287 aa).

9 helical membrane-spanning segments follow: residues 20 to 40 (IGSL…ADGL), 43 to 63 (MHVL…GCVI), 94 to 114 (LGLF…MNTL), 115 to 135 (TIML…MKRY), 137 to 157 (HLPQ…AYAA), 159 to 179 (AGEL…WTIA), 210 to 230 (IIIG…GHSL), 235 to 255 (IYYW…RLIG), and 266 to 286 (FLNN…SVMM).

This sequence belongs to the UbiA prenyltransferase family. Mg(2+) is required as a cofactor.

Its subcellular location is the cell inner membrane. It carries out the reaction all-trans-octaprenyl diphosphate + 4-hydroxybenzoate = 4-hydroxy-3-(all-trans-octaprenyl)benzoate + diphosphate. It functions in the pathway cofactor biosynthesis; ubiquinone biosynthesis. Its function is as follows. Catalyzes the prenylation of para-hydroxybenzoate (PHB) with an all-trans polyprenyl group. Mediates the second step in the final reaction sequence of ubiquinone-8 (UQ-8) biosynthesis, which is the condensation of the polyisoprenoid side chain with PHB, generating the first membrane-bound Q intermediate 3-octaprenyl-4-hydroxybenzoate. This is 4-hydroxybenzoate octaprenyltransferase from Photobacterium profundum (strain SS9).